A 135-amino-acid polypeptide reads, in one-letter code: Small ribosomal subunit protein uS11 (135 aa).

A disordered region spans residues Met1–His26. The span at Arg12–Ser23 shows a compositional bias: basic residues.

It belongs to the universal ribosomal protein uS11 family. In terms of assembly, part of the 30S ribosomal subunit. Interacts with proteins S7 and S18. Binds to IF-3.

Its function is as follows. Located on the platform of the 30S subunit, it bridges several disparate RNA helices of the 16S rRNA. Forms part of the Shine-Dalgarno cleft in the 70S ribosome. This is Small ribosomal subunit protein uS11 from Beutenbergia cavernae (strain ATCC BAA-8 / DSM 12333 / CCUG 43141 / JCM 11478 / NBRC 16432 / NCIMB 13614 / HKI 0122).